The following is a 443-amino-acid chain: Serine--tRNA ligase (443 aa).

250-252 (TSE) is an L-serine binding site. Residue 281–283 (RSE) coordinates ATP. Glu304 is an L-serine binding site. 368–371 (EISS) contributes to the ATP binding site. Ser403 contributes to the L-serine binding site.

It belongs to the class-II aminoacyl-tRNA synthetase family. Type-1 seryl-tRNA synthetase subfamily. Homodimer. The tRNA molecule binds across the dimer.

The protein localises to the cytoplasm. It catalyses the reaction tRNA(Ser) + L-serine + ATP = L-seryl-tRNA(Ser) + AMP + diphosphate + H(+). It carries out the reaction tRNA(Sec) + L-serine + ATP = L-seryl-tRNA(Sec) + AMP + diphosphate + H(+). The protein operates within aminoacyl-tRNA biosynthesis; selenocysteinyl-tRNA(Sec) biosynthesis; L-seryl-tRNA(Sec) from L-serine and tRNA(Sec): step 1/1. In terms of biological role, catalyzes the attachment of serine to tRNA(Ser). Is also able to aminoacylate tRNA(Sec) with serine, to form the misacylated tRNA L-seryl-tRNA(Sec), which will be further converted into selenocysteinyl-tRNA(Sec). The chain is Serine--tRNA ligase from Variovorax paradoxus (strain S110).